The primary structure comprises 169 residues: Photosystem I assembly protein Ycf3 (169 aa).

TPR repeat units follow at residues 36–69 (AFTY…EIDP), 73–106 (SYIL…NPFL), and 121–154 (GEQA…TPGN).

The protein belongs to the Ycf3 family.

It is found in the plastid. It localises to the chloroplast thylakoid membrane. Functionally, essential for the assembly of the photosystem I (PSI) complex. May act as a chaperone-like factor to guide the assembly of the PSI subunits. This chain is Photosystem I assembly protein Ycf3, found in Cucumis sativus (Cucumber).